The following is a 202-amino-acid chain: Protein G1-like4 (202 aa).

Disordered stretches follow at residues 1-44 (MDLS…RYEA) and 158-202 (RARG…GAAC). Residues 12–22 (SGGGNGGGGGS) show a composition bias toward gly residues. The segment covering 23 to 36 (SSSNSSPSMGAGAP) has biased composition (low complexity). The ALOG domain occupies 41-168 (RYEAQKRRDW…ARGVSYEKKK (128 aa)). Positions 166 to 170 (KKKRK) match the Nuclear localization signal motif. A compositionally biased stretch (low complexity) spans 173 to 186 (QQQQLQGGDSSGLH). Over residues 192–202 (PPPPPPAGAAC) the composition is skewed to pro residues.

The protein belongs to the plant homeotic and developmental regulators ALOG protein family.

The protein resides in the nucleus. Probable transcription regulator that acts as a developmental regulator by promoting cell growth in response to light. The protein is Protein G1-like4 of Oryza sativa subsp. indica (Rice).